The following is a 53-amino-acid chain: UPF0391 membrane protein BP1737 (53 aa).

2 helical membrane-spanning segments follow: residues 5-25 (AVVFFVIAIIAAVLGFGGIAA) and 30-50 (IAKILFFVFLVLALLSILGGV).

The protein belongs to the UPF0391 family.

The protein localises to the cell membrane. This is UPF0391 membrane protein BP1737 from Bordetella pertussis (strain Tohama I / ATCC BAA-589 / NCTC 13251).